Consider the following 649-residue polypeptide: Choline transporter-like protein 3 (649 aa).

The chain crosses the membrane as a helical span at residues 33–53 (AWLFLFFLFWTGLVFIMGYSV). N-linked (GlcNAc...) asparagine glycosylation is found at N136 and N151. The next 5 membrane-spanning stretches (helical) occupy residues 213–233 (DTVL…MFTF), 235–255 (FITT…LLFV), 284–304 (LLGF…LIYV), 334–354 (LWTF…LLSL), and 384–404 (LIGL…AVAG). Residues N414, N502, and N520 are each glycosylated (N-linked (GlcNAc...) asparagine). The next 2 membrane-spanning stretches (helical) occupy residues 533–553 (FIIF…GLMA) and 562–582 (VWAV…HSFL).

The protein belongs to the CTL (choline transporter-like) family.

It localises to the membrane. The polypeptide is Choline transporter-like protein 3 (SLC44A3) (Bos taurus (Bovine)).